We begin with the raw amino-acid sequence, 406 residues long: 2,3-diketo-5-methylthiopentyl-1-phosphate enolase (406 aa).

Lys-94 acts as the Proton acceptor in catalysis. Residues Lys-143, 169-172, His-260, Gly-332, and 354-355 each bind substrate; these read KDDE and GG. Mg(2+) contacts are provided by Lys-169, Asp-171, and Glu-172. N6-carboxylysine is present on Lys-169.

It belongs to the RuBisCO large chain family. Type IV subfamily. Homodimer. It depends on Mg(2+) as a cofactor.

The enzyme catalyses 5-methylsulfanyl-2,3-dioxopentyl phosphate = 2-hydroxy-5-methylsulfanyl-3-oxopent-1-enyl phosphate. It participates in amino-acid biosynthesis; L-methionine biosynthesis via salvage pathway; L-methionine from S-methyl-5-thio-alpha-D-ribose 1-phosphate: step 3/6. In terms of biological role, catalyzes the enolization of 2,3-diketo-5-methylthiopentyl-1-phosphate (DK-MTP-1-P) into 2-hydroxy-3-keto-5-methylthiopentenyl-1-phosphate (HK-MTPenyl-1-P). In Bacillus pumilus (strain SAFR-032), this protein is 2,3-diketo-5-methylthiopentyl-1-phosphate enolase.